We begin with the raw amino-acid sequence, 363 residues long: DNA replication and repair protein RecF (363 aa).

Position 30-37 (30-37 (GDNAQGKT)) interacts with ATP.

Belongs to the RecF family.

It is found in the cytoplasm. The RecF protein is involved in DNA metabolism; it is required for DNA replication and normal SOS inducibility. RecF binds preferentially to single-stranded, linear DNA. It also seems to bind ATP. The sequence is that of DNA replication and repair protein RecF from Lachnospira eligens (strain ATCC 27750 / DSM 3376 / VPI C15-48 / C15-B4) (Eubacterium eligens).